A 989-amino-acid chain; its full sequence is Phosphoenolpyruvate carboxylase (989 aa).

Catalysis depends on residues H175 and K630.

The protein belongs to the PEPCase type 1 family. Mg(2+) serves as cofactor.

The enzyme catalyses oxaloacetate + phosphate = phosphoenolpyruvate + hydrogencarbonate. In terms of biological role, forms oxaloacetate, a four-carbon dicarboxylic acid source for the tricarboxylic acid cycle. The polypeptide is Phosphoenolpyruvate carboxylase (Prochlorococcus marinus (strain MIT 9515)).